A 504-amino-acid chain; its full sequence is ATP synthase subunit alpha (504 aa).

170-177 (GDRQTGKT) is an ATP binding site.

This sequence belongs to the ATPase alpha/beta chains family. F-type ATPases have 2 components, CF(1) - the catalytic core - and CF(0) - the membrane proton channel. CF(1) has five subunits: alpha(3), beta(3), gamma(1), delta(1), epsilon(1). CF(0) has four main subunits: a(1), b(1), b'(1) and c(9-12).

The protein resides in the cellular thylakoid membrane. It carries out the reaction ATP + H2O + 4 H(+)(in) = ADP + phosphate + 5 H(+)(out). Produces ATP from ADP in the presence of a proton gradient across the membrane. The alpha chain is a regulatory subunit. This chain is ATP synthase subunit alpha, found in Prochlorococcus marinus (strain NATL1A).